Consider the following 229-residue polypeptide: Cytochrome c oxidase subunit 2 (229 aa).

Residues 1-26 (MANWTQLGLQDASSPLMEELIYFHDY) lie on the Mitochondrial intermembrane side of the membrane. Residues 27–48 (TLIILTLITILVFYGLASLIVS) form a helical membrane-spanning segment. Over 49 to 62 (SNTNRFFLEGQSLE) the chain is Mitochondrial matrix. Residues 63 to 82 (TIWTVIPAVILIFIALPSLQ) form a helical membrane-spanning segment. Residues 83 to 229 (LLYLIDEVNN…ENWVSNFLNE (147 aa)) are Mitochondrial intermembrane-facing. Cu cation contacts are provided by H161, C196, E198, C200, H204, and M207. Residue E198 coordinates Mg(2+).

The protein belongs to the cytochrome c oxidase subunit 2 family. In terms of assembly, component of the cytochrome c oxidase (complex IV, CIV), a multisubunit enzyme composed of a catalytic core of 3 subunits and several supernumerary subunits. The complex exists as a monomer or a dimer and forms supercomplexes (SCs) in the inner mitochondrial membrane with ubiquinol-cytochrome c oxidoreductase (cytochrome b-c1 complex, complex III, CIII). Cu cation serves as cofactor.

Its subcellular location is the mitochondrion inner membrane. It catalyses the reaction 4 Fe(II)-[cytochrome c] + O2 + 8 H(+)(in) = 4 Fe(III)-[cytochrome c] + 2 H2O + 4 H(+)(out). Component of the cytochrome c oxidase, the last enzyme in the mitochondrial electron transport chain which drives oxidative phosphorylation. The respiratory chain contains 3 multisubunit complexes succinate dehydrogenase (complex II, CII), ubiquinol-cytochrome c oxidoreductase (cytochrome b-c1 complex, complex III, CIII) and cytochrome c oxidase (complex IV, CIV), that cooperate to transfer electrons derived from NADH and succinate to molecular oxygen, creating an electrochemical gradient over the inner membrane that drives transmembrane transport and the ATP synthase. Cytochrome c oxidase is the component of the respiratory chain that catalyzes the reduction of oxygen to water. Electrons originating from reduced cytochrome c in the intermembrane space (IMS) are transferred via the dinuclear copper A center (CU(A)) of subunit 2 and heme A of subunit 1 to the active site in subunit 1, a binuclear center (BNC) formed by heme A3 and copper B (CU(B)). The BNC reduces molecular oxygen to 2 water molecules using 4 electrons from cytochrome c in the IMS and 4 protons from the mitochondrial matrix. The polypeptide is Cytochrome c oxidase subunit 2 (COII) (Pisaster ochraceus (Ochre sea star)).